A 237-amino-acid chain; its full sequence is Phosphatidylserine decarboxylase proenzyme (237 aa).

The Schiff-base intermediate with substrate; via pyruvic acid role is filled by S206. S206 is modified (pyruvic acid (Ser); by autocatalysis).

The protein belongs to the phosphatidylserine decarboxylase family. PSD-A subfamily. As to quaternary structure, heterodimer of a large membrane-associated beta subunit and a small pyruvoyl-containing alpha subunit. Requires pyruvate as cofactor. In terms of processing, is synthesized initially as an inactive proenzyme. Formation of the active enzyme involves a self-maturation process in which the active site pyruvoyl group is generated from an internal serine residue via an autocatalytic post-translational modification. Two non-identical subunits are generated from the proenzyme in this reaction, and the pyruvate is formed at the N-terminus of the alpha chain, which is derived from the carboxyl end of the proenzyme. The post-translation cleavage follows an unusual pathway, termed non-hydrolytic serinolysis, in which the side chain hydroxyl group of the serine supplies its oxygen atom to form the C-terminus of the beta chain, while the remainder of the serine residue undergoes an oxidative deamination to produce ammonia and the pyruvoyl prosthetic group on the alpha chain.

The protein localises to the cell membrane. It carries out the reaction a 1,2-diacyl-sn-glycero-3-phospho-L-serine + H(+) = a 1,2-diacyl-sn-glycero-3-phosphoethanolamine + CO2. The protein operates within phospholipid metabolism; phosphatidylethanolamine biosynthesis; phosphatidylethanolamine from CDP-diacylglycerol: step 2/2. Functionally, catalyzes the formation of phosphatidylethanolamine (PtdEtn) from phosphatidylserine (PtdSer). This is Phosphatidylserine decarboxylase proenzyme from Rhodococcus opacus (strain B4).